A 119-amino-acid polypeptide reads, in one-letter code: Hydrogenase maturation factor HypA (119 aa).

His-2 contributes to the Ni(2+) binding site. Zn(2+) contacts are provided by Cys-73, Cys-76, Cys-89, and Cys-92.

This sequence belongs to the HypA/HybF family.

Its function is as follows. Involved in the maturation of [NiFe] hydrogenases. Required for nickel insertion into the metal center of the hydrogenase. The chain is Hydrogenase maturation factor HypA from Dehalococcoides mccartyi (strain ATCC BAA-2100 / JCM 16839 / KCTC 5957 / BAV1).